Here is a 239-residue protein sequence, read N- to C-terminus: Ribonuclease 3 (239 aa).

An RNase III domain is found at 11 to 133; sequence HAAIQKKLGY…MFAAVSFDAD (123 aa). Residue Glu46 participates in Mg(2+) binding. Residue Asp50 is part of the active site. Positions 119 and 122 each coordinate Mg(2+). Residues 160-230 form the DRBM domain; that stretch reads DGKTALQEAL…AKEALKWLEE (71 aa).

The protein belongs to the ribonuclease III family. As to quaternary structure, homodimer. Mg(2+) serves as cofactor.

It localises to the cytoplasm. It catalyses the reaction Endonucleolytic cleavage to 5'-phosphomonoester.. Digests double-stranded RNA. Involved in the processing of primary rRNA transcript to yield the immediate precursors to the large and small rRNAs (23S and 16S). Also processes some mRNAs, and tRNAs when they are encoded in the rRNA operon. Its function is as follows. CRISPR (clustered regularly interspaced short palindromic repeat) is an adaptive immune system that provides protection against mobile genetic elements (viruses, transposable elements and conjugative plasmids). CRISPR clusters contain spacers, sequences complementary to antecedent mobile elements, and target invading nucleic acids. CRISPR clusters are transcribed and processed into CRISPR RNA (crRNA). In this organism endogenous ribonuclease 3 and Cas9 are required for correct coprocessing of pre-crRNA and the trans-encoded small RNA (tracrRNA). Cas9, crRNA and tracRNA are required for cleavage of invading DNA. Involved in 3'-end processing but not 5'-end processing of crRNA and tracrRNA. The protein is Ribonuclease 3 of Neisseria meningitidis serogroup C (strain 8013).